The primary structure comprises 238 residues: Sugar fermentation stimulation protein homolog (238 aa).

The protein belongs to the SfsA family.

The chain is Sugar fermentation stimulation protein homolog from Pseudomonas entomophila (strain L48).